Consider the following 220-residue polypeptide: Large ribosomal subunit protein uL1 (220 aa).

This sequence belongs to the universal ribosomal protein uL1 family. As to quaternary structure, part of the 50S ribosomal subunit.

Functionally, binds directly to 23S rRNA. The L1 stalk is quite mobile in the ribosome, and is involved in E site tRNA release. In terms of biological role, protein L1 is also a translational repressor protein, it controls the translation of the L11 operon by binding to its mRNA. This Ehrlichia chaffeensis (strain ATCC CRL-10679 / Arkansas) protein is Large ribosomal subunit protein uL1.